We begin with the raw amino-acid sequence, 226 residues long: Teichuronic acid biosynthesis protein TuaF (226 aa).

The next 2 helical transmembrane spans lie at 15-35 and 202-222; these read NIIWIIAVPIILGAAGYILPS and VLGVMIGLTIAFMFVVIPEFF.

Its subcellular location is the cell membrane. It functions in the pathway cell wall biogenesis; teichuronic acid biosynthesis. This is Teichuronic acid biosynthesis protein TuaF (tuaF) from Bacillus subtilis (strain 168).